The chain runs to 418 residues: Serine hydroxymethyltransferase (418 aa).

Residues L121 and 125-127 (GHL) each bind (6S)-5,6,7,8-tetrahydrofolate. At K230 the chain carries N6-(pyridoxal phosphate)lysine. Position 356–358 (356–358 (SPF)) interacts with (6S)-5,6,7,8-tetrahydrofolate.

It belongs to the SHMT family. As to quaternary structure, homodimer. Requires pyridoxal 5'-phosphate as cofactor.

Its subcellular location is the cytoplasm. It catalyses the reaction (6R)-5,10-methylene-5,6,7,8-tetrahydrofolate + glycine + H2O = (6S)-5,6,7,8-tetrahydrofolate + L-serine. It participates in one-carbon metabolism; tetrahydrofolate interconversion. The protein operates within amino-acid biosynthesis; glycine biosynthesis; glycine from L-serine: step 1/1. Catalyzes the reversible interconversion of serine and glycine with tetrahydrofolate (THF) serving as the one-carbon carrier. This reaction serves as the major source of one-carbon groups required for the biosynthesis of purines, thymidylate, methionine, and other important biomolecules. Also exhibits THF-independent aldolase activity toward beta-hydroxyamino acids, producing glycine and aldehydes, via a retro-aldol mechanism. This Shewanella pealeana (strain ATCC 700345 / ANG-SQ1) protein is Serine hydroxymethyltransferase.